A 156-amino-acid polypeptide reads, in one-letter code: Small ribosomal subunit protein uS7 (156 aa).

This sequence belongs to the universal ribosomal protein uS7 family. Part of the 30S ribosomal subunit. Contacts proteins S9 and S11.

One of the primary rRNA binding proteins, it binds directly to 16S rRNA where it nucleates assembly of the head domain of the 30S subunit. Is located at the subunit interface close to the decoding center, probably blocks exit of the E-site tRNA. This is Small ribosomal subunit protein uS7 from Kineococcus radiotolerans (strain ATCC BAA-149 / DSM 14245 / SRS30216).